The following is a 204-amino-acid chain: Hydrophilin YNL190W (204 aa).

Residues 1–20 (MKFSSVTAITLATVATVATA) form the signal peptide. Positions 35–46 (SDGSLTTTTSTH) are enriched in low complexity. The segment at 35-179 (SDGSLTTTTS…ARKNNAAPGP (145 aa)) is disordered. Basic residues predominate over residues 47–59 (TTHKYGKFNKTSK). Residues N55, N64, N75, N84, N95, N104, N115, N124, N135, N144, and N155 are each glycosylated (N-linked (GlcNAc...) asparagine). Positions 67 to 79 (GTHKYGKFNKTSK) are enriched in basic residues. Residues 87 to 99 (GTHKYGKFNKTSK) show a composition bias toward basic residues. Residues 107-119 (GTHKYGKFNKTSK) are compositionally biased toward basic residues. A compositionally biased stretch (basic residues) spans 127–139 (GTHKYGKFNKTSK). A compositionally biased stretch (basic residues) spans 147-156 (GTHKYGKFNK). Residue N174 is the site of GPI-anchor amidated asparagine attachment. Positions 175 to 204 (AAPGPSNFNSIKLFGVTAGSAAVAGALLLL) are cleaved as a propeptide — removed in mature form.

It belongs to the PGA14 family. The GPI-anchor is attached to the protein in the endoplasmic reticulum and serves to target the protein to the cell surface. There, the glucosamine-inositol phospholipid moiety is cleaved off and the GPI-modified mannoprotein is covalently attached via its lipidless GPI glycan remnant to the 1,6-beta-glucan of the outer cell wall layer.

It is found in the secreted. The protein localises to the cell wall. Its subcellular location is the membrane. In terms of biological role, hydrophilin which is essential to overcome the simple stress of the desiccation-rehydration process. In Saccharomyces cerevisiae (strain ATCC 204508 / S288c) (Baker's yeast), this protein is Hydrophilin YNL190W.